Consider the following 463-residue polypeptide: tRNA-2-methylthio-N(6)-dimethylallyladenosine synthase (463 aa).

The region spanning 19 to 135 (GSYWITTFGC…LESLLNQVDS (117 aa)) is the MTTase N-terminal domain. [4Fe-4S] cluster contacts are provided by Cys28, Cys64, Cys98, Cys170, Cys174, and Cys177. One can recognise a Radical SAM core domain in the interval 156–393 (RDSSFCGWVN…NSLVENIAKE (238 aa)). In terms of domain architecture, TRAM spans 396-463 (QRYKNTSQEI…RPFSLTAKLL (68 aa)).

The protein belongs to the methylthiotransferase family. MiaB subfamily. Monomer. [4Fe-4S] cluster is required as a cofactor.

It localises to the cytoplasm. The enzyme catalyses N(6)-dimethylallyladenosine(37) in tRNA + (sulfur carrier)-SH + AH2 + 2 S-adenosyl-L-methionine = 2-methylsulfanyl-N(6)-dimethylallyladenosine(37) in tRNA + (sulfur carrier)-H + 5'-deoxyadenosine + L-methionine + A + S-adenosyl-L-homocysteine + 2 H(+). Catalyzes the methylthiolation of N6-(dimethylallyl)adenosine (i(6)A), leading to the formation of 2-methylthio-N6-(dimethylallyl)adenosine (ms(2)i(6)A) at position 37 in tRNAs that read codons beginning with uridine. The sequence is that of tRNA-2-methylthio-N(6)-dimethylallyladenosine synthase from Prochlorococcus marinus (strain NATL1A).